Reading from the N-terminus, the 340-residue chain is Protein LSM14 homolog car-1 (340 aa).

The Sm domain maps to 1-81 (MSNQTPYIGS…IKDLIVCDTP (81 aa)). Low complexity predominate over residues 101 to 125 (SRSAPASDGAPAASAGSSRAGTPSR). The tract at residues 101–148 (SRSAPASDGAPAASAGSSRAGTPSRNSPLGQIIQNQRPGRGGYQQNFQ) is disordered. Residues 126-148 (NSPLGQIIQNQRPGRGGYQQNFQ) show a composition bias toward polar residues. In terms of domain architecture, DFDF spans 178-214 (VNHREKLKFESDFDFEKANEKFQEVLVDNLEKLNIED). The short motif at 227 to 243 (AFYDKKTSFFDNISCES) is the FFD box element. The TFG box signature appears at 251–271 (TGRPDWKKERETNQETFGHNA). Positions 277–340 (YRRGFGGRGR…QGNTAAAAEQ (64 aa)) are disordered. Over residues 280–296 (GFGGRGRGGNRGYGGYN) the composition is skewed to gly residues. The segment covering 312-325 (GYRQNNGGYRRGGY) has biased composition (low complexity).

Belongs to the LSM14 family.

Its subcellular location is the nucleus. Functionally, transcriptional regulator. Involved in modulating embryonic expression of ATP-dependent chaperone cdc-48.1. May play a role in mRNA gene silencing, and RNA granule (P-body) assembly. The polypeptide is Protein LSM14 homolog car-1 (Caenorhabditis elegans).